Consider the following 584-residue polypeptide: Optineurin (584 aa).

Residues 1–32 are disordered; it reads MSHQPLSCLTEKGDSPCETPGNGPSNMVHPSL. A coiled-coil region spans residues 38-180; it reads EELLQQMKEL…VSELQLKLNS (143 aa). Residues 58-219 are interaction with Rab8; sequence MKLNNQAMKG…TPTRTDPISL (162 aa). Residues 186–191 carry the LIR motif; it reads DSFVEI. At serine 187 the chain carries Phosphoserine. 2 coiled-coil regions span residues 243 to 278 and 307 to 511; these read CLRE…HSST and IQVT…DIEE. Residues 267 to 295 are compositionally biased toward basic and acidic residues; the sequence is DFEKKANGHSSTEKQTARRADREKEDKGQ. The tract at residues 267–302 is disordered; the sequence is DFEKKANGHSSTEKQTARRADREKEDKGQESVGSEV. Serine 345 is modified (phosphoserine). Residues 414–584 are interaction with HD; the sequence is TKQQAEKVDK…LQIHVMDCII (171 aa). An interaction with MYO6 region spans residues 415–524; sequence KQQAEKVDKM…RQSLMEMQCR (110 aa). The UBAN motif lies at 477-482; sequence DFHAER. Phosphoserine is present on serine 530. Residues 554 to 584 form a CCHC NOA-type zinc finger; the sequence is PRSIPIHSCPKCGEVLPDIDTLQIHVMDCII. Zn(2+) contacts are provided by cysteine 562, cysteine 565, histidine 578, and cysteine 582.

As to quaternary structure, self-associates. Interacts with HD, GTF3A, TRAF3, TBK1 and MYO6. Interacts (via UBAN) with ubiquitinated TFRC. Interacts with active GTP-bound Rab8 (RAB8A and/or RAB8B). Interacts with TBC1D17. Binds to linear ubiquitin chains. Interacts with LC3 family members MAP1LC3A, MAP1LC3B, GABARAP, GABARAPL1 and GABARAPL2; OPTN phosphorylation increases the association (at least with MAP1LC3B). Interacts with RAB12; the interaction may be indirect. Interacts with TBK1; this interaction leads to the Golgi localization of TBK1 and its subsequent activation. Interacts with palmitoyltransferase ZDHHC17/HIP14; the interaction does not lead to palmitoylation of OPTN. Interacts with CYLD. Interacts with TOM1; the interaction is indirect and is mediated by MYO6, which acts as a bridge between TOM1 and OPTN. Interacts with USP12; the interaction is independent of USP12 deubiquitinase activity and may be involved in regulation of autophagic flux. Post-translationally, phosphorylated by TBK1, leading to restrict bacterial proliferation in case of infection. As to expression, in eye, it is expressed in anterior segment, retina, and optic nerve blood vessels (at protein level). Highly expressed in adult liver, heart and testis.

It localises to the cytoplasm. Its subcellular location is the perinuclear region. It is found in the golgi apparatus. The protein localises to the trans-Golgi network. The protein resides in the cytoplasmic vesicle. It localises to the autophagosome. Its subcellular location is the recycling endosome. Plays an important role in the maintenance of the Golgi complex, in membrane trafficking, in exocytosis, through its interaction with myosin VI and Rab8. Links myosin VI to the Golgi complex and plays an important role in Golgi ribbon formation. Plays a role in the activation of innate immune response during viral infection. Mechanistically, recruits TBK1 at the Golgi apparatus, promoting its trans-phosphorylation after RLR or TLR3 stimulation. In turn, activated TBK1 phosphorylates its downstream partner IRF3 to produce IFN-beta. Plays a neuroprotective role in the eye and optic nerve. May act by regulating membrane trafficking and cellular morphogenesis via a complex that contains Rab8 and huntingtin (HD). Mediates the interaction of Rab8 with the probable GTPase-activating protein TBC1D17 during Rab8-mediated endocytic trafficking, such as that of transferrin receptor (TFRC/TfR); regulates Rab8 recruitment to tubules emanating from the endocytic recycling compartment. Autophagy receptor that interacts directly with both the cargo to become degraded and an autophagy modifier of the MAP1 LC3 family; targets ubiquitin-coated bacteria (xenophagy), such as cytoplasmic Salmonella enterica, and appears to function in the same pathway as SQSTM1 and CALCOCO2/NDP52. The protein is Optineurin (Optn) of Mus musculus (Mouse).